A 331-amino-acid polypeptide reads, in one-letter code: 5'-AMP-activated protein kinase subunit gamma-1 (331 aa).

The segment covering 1–12 (METVISSDSSPA) has biased composition (polar residues). Residues 1–26 (METVISSDSSPAVENEHPQETPESNN) form a disordered region. 3 consecutive CBS domains span residues 43–103 (PTSS…KSAL), 125–187 (SFKP…PKPE), and 198–260 (IGTY…NLDV). ADP-binding positions include R70, 85 to 90 (MLTITD), V130, 151 to 152 (HR), and K170. Residues R70, 85 to 90 (MLTITD), V130, H151, 151 to 152 (HR), K170, T200, A205, 226 to 227 (SA), and 242 to 245 (SKFD) each bind AMP. ATP-binding positions include R70, 85 to 90 (MLTITD), V130, 151 to 152 (HR), R152, and K170. The AMPK pseudosubstrate signature appears at 138–159 (LFDAVSSLIRNKIHRLPVIDPE). 242-245 (SKFD) lines the ADP pocket. 242–245 (SKFD) is an ATP binding site. Phosphoserine; by ULK1 is present on S261. T263 bears the Phosphothreonine; by ULK1 mark. ADP is bound at residue R269. R269 is a binding site for AMP. R269 contacts ATP. Residue S270 is modified to Phosphoserine; by ULK1. Residues 272 to 329 (YFEGVLKCYLHETLETIINRLVEAEVHRLVVVDENDVVKGIVSLSDILQALVLTGGEK) form the CBS 4 domain. ADP is bound by residues L277 and 298 to 299 (HR). AMP is bound by residues L277, H298, 298-299 (HR), and 314-317 (SLSD). ATP is bound by residues L277 and 298 to 299 (HR).

It belongs to the 5'-AMP-activated protein kinase gamma subunit family. In terms of assembly, AMPK is a heterotrimer of an alpha catalytic subunit (PRKAA1 or PRKAA2), a beta (PRKAB1 or PRKAB2) and a gamma non-catalytic subunits (PRKAG1, PRKAG2 or PRKAG3). Interacts with FNIP1 and FNIP2. In terms of processing, phosphorylated by ULK1 and ULK2; leading to negatively regulate AMPK activity and suggesting the existence of a regulatory feedback loop between ULK1, ULK2 and AMPK. Glycosylated; O-GlcNAcylated by OGT, promoting the AMP-activated protein kinase (AMPK) activity.

Its function is as follows. AMP/ATP-binding subunit of AMP-activated protein kinase (AMPK), an energy sensor protein kinase that plays a key role in regulating cellular energy metabolism. In response to reduction of intracellular ATP levels, AMPK activates energy-producing pathways and inhibits energy-consuming processes: inhibits protein, carbohydrate and lipid biosynthesis, as well as cell growth and proliferation. AMPK acts via direct phosphorylation of metabolic enzymes, and by longer-term effects via phosphorylation of transcription regulators. Also acts as a regulator of cellular polarity by remodeling the actin cytoskeleton; probably by indirectly activating myosin. Gamma non-catalytic subunit mediates binding to AMP, ADP and ATP, leading to activate or inhibit AMPK: AMP-binding results in allosteric activation of alpha catalytic subunit (PRKAA1 or PRKAA2) both by inducing phosphorylation and preventing dephosphorylation of catalytic subunits. ADP also stimulates phosphorylation, without stimulating already phosphorylated catalytic subunit. ATP promotes dephosphorylation of catalytic subunit, rendering the AMPK enzyme inactive. The sequence is that of 5'-AMP-activated protein kinase subunit gamma-1 (PRKAG1) from Homo sapiens (Human).